Consider the following 200-residue polypeptide: Dephospho-CoA kinase (200 aa).

Residues 3-200 form the DPCK domain; the sequence is IFGLTGGIGS…LNVNNKCNMD (198 aa). 11-16 contributes to the ATP binding site; that stretch reads GSGKSL.

The protein belongs to the CoaE family.

The protein localises to the cytoplasm. It carries out the reaction 3'-dephospho-CoA + ATP = ADP + CoA + H(+). It functions in the pathway cofactor biosynthesis; coenzyme A biosynthesis; CoA from (R)-pantothenate: step 5/5. Catalyzes the phosphorylation of the 3'-hydroxyl group of dephosphocoenzyme A to form coenzyme A. This chain is Dephospho-CoA kinase, found in Ehrlichia canis (strain Jake).